The following is a 227-amino-acid chain: Large ribosomal subunit protein bL25 (227 aa).

Residues 199 to 227 (AIAEAQSAEAAEEKAEESAEDEKKDGEEA) are disordered. The span at 209–227 (AEEKAEESAEDEKKDGEEA) shows a compositional bias: basic and acidic residues.

This sequence belongs to the bacterial ribosomal protein bL25 family. CTC subfamily. As to quaternary structure, part of the 50S ribosomal subunit; part of the 5S rRNA/L5/L18/L25 subcomplex. Contacts the 5S rRNA. Binds to the 5S rRNA independently of L5 and L18.

In terms of biological role, this is one of the proteins that binds to the 5S RNA in the ribosome where it forms part of the central protuberance. The polypeptide is Large ribosomal subunit protein bL25 (Methylobacterium radiotolerans (strain ATCC 27329 / DSM 1819 / JCM 2831 / NBRC 15690 / NCIMB 10815 / 0-1)).